Here is a 937-residue protein sequence, read N- to C-terminus: MEKGVEKTQIIDYDGNVIEDLKEWMIDNKLNDLGFSYNVIAVLGSQSSGKSTLLNNLFKTSFDVMNTKQGHSQTTKGLWLSYDKFDDETNNSSSFFKLKKKNKPTLILDVEGTDSKERGDNRLTFEHRSALFCLALADCVIVNLWYHSLGNFTASNYGLLKTVMEVNLELFQQEKNSPKTILLFTVRDWFEEFAPIEVVRNKILDEYINKIWKEMKKPKEAEKLNINNFFIIEVVGLSHGIIKKEDFLKDVNNLRDKWINNLRPSKYSRNIPSDGFAQYCNNIWNTIVKQSQLDIPSQKEMLSTFRCQEIKNNVINNINKEIKEKSIESHNKVIENFKEWAEKNIIQKCLDDYFKDASRYKENICLRTSQELLDYLFTQLQAIVDNNLQYIQRTLCTKFFNELSNMYKICTIEKNTFSFSRDSNLKTVKDNNKNTSHEDIKRDLLNNNQDKCVHLWSNFLYNADKLEYFTFCNFYENYEKSNIEIKTNMKNDDNLKNDDNLKNDAHNNITTHQFNYKPTLSVLSTSIYKDSNRIRNIQCGILLNKTRQTIKNSFKNMDTYLLTTKNTEEYWNNTVQLVLKLQDNINTHLTKCFINLKGTNHNNLNIYNDDMMYNNDDMVFNNNDDDDNNNNNNNNNYYYYNKNDDANLSKDENYNNKFSFSLTNEKGIFQNINNNNEGSDEICYTNALKKIDLIKNKQVYKSTINEDINNKLQNKKYIHELKNYYLDEIMDVLKNKLDEISENLATIIIQRFESVFNYDEYEQPRQWRDISMAELKKIFLKSKNYAFLIIDILQKNIKVELIDDYLPNNFIKDEIIEKGKIKAKRRIQEICRDAQYIQETGSKMSLKNVPVVFWIILLLFGWNEILFFIRMFFKLNVILPLFFAAAFIVSTFVYNGNTQALSYINKIIFYMAKNSYNFFKHIQAISNPPPKNVQKQE.

At 1–848 the chain is on the cytoplasmic side; that stretch reads MEKGVEKTQI…ETGSKMSLKN (848 aa). The GB1/RHD3-type G domain maps to 34 to 280; it reads GFSYNVIAVL…IPSDGFAQYC (247 aa). Residue 44 to 51 coordinates GTP; that stretch reads GSQSSGKS. Coiled coils occupy residues 319–339 and 725–750; these read NKEIKEKSIESHNKVIENFKE and YLDEIMDVLKNKLDEISENLATIIIQ. Residues 849–869 form a helical membrane-spanning segment; sequence VPVVFWIILLLFGWNEILFFI. At 870 to 872 the chain is on the lumenal side; that stretch reads RMF. The helical transmembrane segment at 873–893 threads the bilayer; the sequence is FKLNVILPLFFAAAFIVSTFV. Over 894 to 937 the chain is Cytoplasmic; that stretch reads YNGNTQALSYINKIIFYMAKNSYNFFKHIQAISNPPPKNVQKQE.

It belongs to the TRAFAC class dynamin-like GTPase superfamily. GB1/RHD3 GTPase family. RHD3 subfamily.

It localises to the endoplasmic reticulum membrane. Its function is as follows. Probable GTP-binding protein involved in generating and maintaining the structure of the tubular endoplasmic reticulum network. This chain is Protein SEY1 homolog, found in Plasmodium falciparum (isolate 3D7).